The following is a 301-amino-acid chain: Possible hemolysin C (301 aa).

CBS domains are found at residues 80–142 (MVPR…NGRL) and 145–202 (LIRK…IDDE).

The protein belongs to the UPF0053 family. Hemolysin C subfamily.

In Rickettsia akari (strain Hartford), this protein is Possible hemolysin C (tlyC).